The primary structure comprises 545 residues: Phenylalanine--tRNA ligase beta subunit (545 aa).

Residues 268–343 form the B5 domain; the sequence is FLHKIQNVRE…MSIGYNNLEP (76 aa). Residues Asp-321, Asp-327, Glu-330, and Asp-331 each coordinate Mg(2+).

Belongs to the phenylalanyl-tRNA synthetase beta subunit family. Type 2 subfamily. Tetramer of two alpha and two beta subunits. Mg(2+) is required as a cofactor.

Its subcellular location is the cytoplasm. It carries out the reaction tRNA(Phe) + L-phenylalanine + ATP = L-phenylalanyl-tRNA(Phe) + AMP + diphosphate + H(+). The chain is Phenylalanine--tRNA ligase beta subunit from Saccharolobus islandicus (strain M.14.25 / Kamchatka #1) (Sulfolobus islandicus).